Here is a 431-residue protein sequence, read N- to C-terminus: Enolase (431 aa).

Residue Gln167 participates in (2R)-2-phosphoglycerate binding. Catalysis depends on Glu209, which acts as the Proton donor. Mg(2+) contacts are provided by Asp246, Glu290, and Asp316. Lys341, Arg370, Ser371, and Lys392 together coordinate (2R)-2-phosphoglycerate. The Proton acceptor role is filled by Lys341.

This sequence belongs to the enolase family. In terms of assembly, component of the RNA degradosome, a multiprotein complex involved in RNA processing and mRNA degradation. It depends on Mg(2+) as a cofactor.

Its subcellular location is the cytoplasm. The protein localises to the secreted. It localises to the cell surface. The enzyme catalyses (2R)-2-phosphoglycerate = phosphoenolpyruvate + H2O. It functions in the pathway carbohydrate degradation; glycolysis; pyruvate from D-glyceraldehyde 3-phosphate: step 4/5. Its function is as follows. Catalyzes the reversible conversion of 2-phosphoglycerate (2-PG) into phosphoenolpyruvate (PEP). It is essential for the degradation of carbohydrates via glycolysis. The chain is Enolase from Shigella flexneri serotype 5b (strain 8401).